The primary structure comprises 303 residues: D-alanine--D-alanine ligase (303 aa).

Residues 104–300 (KLLWNAVGLP…FEKLVERVLE (197 aa)) form the ATP-grasp domain. 132 to 187 (IAKLSLPVFVKPSSEGSSVGVFKVKTKEELLPAITAALEFDTIVLVEEFLTGAEYS) is a binding site for ATP. Positions 254, 267, and 269 each coordinate Mg(2+).

The protein belongs to the D-alanine--D-alanine ligase family. Requires Mg(2+) as cofactor. The cofactor is Mn(2+).

Its subcellular location is the cytoplasm. The catalysed reaction is 2 D-alanine + ATP = D-alanyl-D-alanine + ADP + phosphate + H(+). It functions in the pathway cell wall biogenesis; peptidoglycan biosynthesis. Cell wall formation. This chain is D-alanine--D-alanine ligase, found in Haemophilus ducreyi (strain 35000HP / ATCC 700724).